The primary structure comprises 401 residues: DNA replication and repair protein RecF (401 aa).

An ATP-binding site is contributed by 30 to 37; the sequence is GYNGIGKT.

It belongs to the RecF family.

It localises to the cytoplasm. Its function is as follows. The RecF protein is involved in DNA metabolism; it is required for DNA replication and normal SOS inducibility. RecF binds preferentially to single-stranded, linear DNA. It also seems to bind ATP. The polypeptide is DNA replication and repair protein RecF (Arthrobacter sp. (strain FB24)).